Consider the following 324-residue polypeptide: Endochitinase 1 (324 aa).

The N-terminal stretch at 1–22 (MSFLQALSIFLLLLLYVVVGSA) is a signal peptide. The 42-residue stretch at 23–64 (EQCGRQAGGALCPGGLCCSQFGWCGSTADYCTVPGCQSQCSG) folds into the Chitin-binding type-1 domain. 7 disulfide bridges follow: Cys25–Cys40, Cys34–Cys46, Cys39–Cys53, Cys58–Cys62, Cys95–Cys158, Cys170–Cys178, and Cys277–Cys309. Glu139 (proton donor) is an active-site residue. Residues 318–324 (GVSVDSM) constitute a propeptide, removed in mature form.

It belongs to the glycosyl hydrolase 19 family. Chitinase class I subfamily.

It carries out the reaction Random endo-hydrolysis of N-acetyl-beta-D-glucosaminide (1-&gt;4)-beta-linkages in chitin and chitodextrins.. Defense against chitin-containing fungal pathogens. The polypeptide is Endochitinase 1 (Gossypium hirsutum (Upland cotton)).